The sequence spans 175 residues: CEN-like protein 4 (175 aa).

This sequence belongs to the phosphatidylethanolamine-binding protein family. In terms of tissue distribution, expressed in vegetative axillary meristems but not in the main shoot meristem.

Its subcellular location is the cytoplasm. Its function is as follows. May form complexes with phosphorylated ligands by interfering with kinases and their effectors. The protein is CEN-like protein 4 (CET4) of Nicotiana tabacum (Common tobacco).